Here is a 663-residue protein sequence, read N- to C-terminus: GPI mannosyltransferase 3 (663 aa).

Over residues 1 to 11 (MPMSARSRRSN) the composition is skewed to basic residues. The disordered stretch occupies residues 1-44 (MPMSARSRRSNPRLPPSPSSSSSSDAVRASPHSSPPSRLRPPSA). Residues 19–42 (SSSSSSDAVRASPHSSPPSRLRPP) show a composition bias toward low complexity. 8 helical membrane-spanning segments follow: residues 47 to 67 (DVSSNILLFLIGFRLVNALTV), 110 to 130 (PLIFAAVYTVADLVARTLGLT), 137 to 157 (LLIAGPGITQAVIAAVGDFYT), 226 to 246 (VLAVSTVVDRFFYGFWTFPPL), 269 to 289 (YASQGYPLLLTTALPFTLVGL), 304 to 324 (GSILVQLASISLAMPATLSVI), 335 to 355 (LLPALHILSASPLVEFFIPAL), and 367 to 387 (LTLIFLLWANVAIAIYTTLFH). Residues 492-512 (HIPRRPSYATPPSSQRQPTQL) are disordered. Over residues 501–511 (TPPSSQRQPTQ) the composition is skewed to polar residues.

The protein belongs to the glycosyltransferase 22 family. PIGB subfamily.

The protein resides in the endoplasmic reticulum membrane. It participates in glycolipid biosynthesis; glycosylphosphatidylinositol-anchor biosynthesis. Functionally, mannosyltransferase involved in glycosylphosphatidylinositol-anchor biosynthesis. Transfers the third mannose to Man2-GlcN-acyl-PI during GPI precursor assembly. The polypeptide is GPI mannosyltransferase 3 (gpi10) (Emericella nidulans (strain FGSC A4 / ATCC 38163 / CBS 112.46 / NRRL 194 / M139) (Aspergillus nidulans)).